Reading from the N-terminus, the 425-residue chain is Nuclear hormone receptor family member nhr-13 (425 aa).

Residues P5–S83 constitute a DNA-binding region (nuclear receptor). 2 NR C4-type zinc fingers span residues C11–C30 and C46–C71. The disordered stretch occupies residues V108–N148. The span at E113 to N130 shows a compositional bias: acidic residues. The segment covering E131–E142 has biased composition (low complexity). The 268-residue stretch at E147 to W414 folds into the NR LBD domain.

It belongs to the nuclear hormone receptor family. As to quaternary structure, may interact with nuclear hormone receptor nhr-49.

It localises to the nucleus. In terms of biological role, orphan nuclear receptor. Involved in regulating fatty acid desaturase genes, acting in concert with nuclear hormone receptor nhr-49. The sequence is that of Nuclear hormone receptor family member nhr-13 (nhr-13) from Caenorhabditis elegans.